Reading from the N-terminus, the 128-residue chain is uncharacterized protein (128 aa).

The span at 1 to 28 (MDADDFGKKDLENGNESPKKPIFMKDWK) shows a compositional bias: basic and acidic residues. Residues 1–30 (MDADDFGKKDLENGNESPKKPIFMKDWKNS) are disordered.

It is found in the cytoplasm. The protein localises to the nucleus. This is an uncharacterized protein from Schizosaccharomyces pombe (strain 972 / ATCC 24843) (Fission yeast).